The chain runs to 1038 residues: Probable LRR receptor-like serine/threonine-protein kinase At1g53430 (1038 aa).

The first 28 residues, 1–28 (MGFIFSTEKVVYVLLLIFVCLENFGSNA), serve as a signal peptide directing secretion. Topologically, residues 29-609 (QLLPEDEVQT…VDTGKPLSNG (581 aa)) are extracellular. Residues asparagine 48, asparagine 77, asparagine 85, asparagine 112, and asparagine 127 are each glycosylated (N-linked (GlcNAc...) asparagine). 6 LRR repeats span residues 113-137 (LTRL…LSQI), 139-160 (LEIL…LGDI), 161-184 (TTLT…LGNL), 185-208 (RSLK…LSNL), 210-234 (NLTE…NWTL), and 236-256 (ERLD…ISNL). Residues asparagine 196, asparagine 210, asparagine 231, asparagine 255, and asparagine 258 are each glycosylated (N-linked (GlcNAc...) asparagine). 5 LRR repeats span residues 259–281 (LTEL…LRNL), 282–305 (MKMK…IGSM), 306–328 (SELK…TFRN), 330–351 (DAFN…QFII), and 352–374 (NSKE…SCNQ). N-linked (GlcNAc...) asparagine glycans are attached at residues asparagine 339, asparagine 363, asparagine 471, and asparagine 561. Residues 610-630 (AVAGIVIAACAVFGLLVLVIL) traverse the membrane as a helical segment. Residues 631–1038 (RLTGYLGGKE…LDDLTDVKIE (408 aa)) are Cytoplasmic-facing. Threonine 658 is subject to Phosphothreonine. The 282-residue stretch at 669 to 950 (FDPENKIGEG…EGKIKVQPPL (282 aa)) folds into the Protein kinase domain. Residues 675–683 (IGEGGFGPV) and lysine 697 contribute to the ATP site. Phosphotyrosine is present on tyrosine 742. Aspartate 795 (proton acceptor) is an active-site residue. A Phosphoserine modification is found at serine 828. Residues threonine 829 and threonine 834 each carry the phosphothreonine modification. The residue at position 842 (tyrosine 842) is a Phosphotyrosine. Residues 984-1038 (RNREQDISSSSMDGPWVDSSFSEPGKDVSLQQQEEGRSSSSSRKLLDDLTDVKIE) are disordered. A compositionally biased stretch (basic and acidic residues) spans 1027 to 1038 (KLLDDLTDVKIE).

The protein belongs to the protein kinase superfamily. Ser/Thr protein kinase family.

The protein resides in the membrane. The enzyme catalyses L-seryl-[protein] + ATP = O-phospho-L-seryl-[protein] + ADP + H(+). It catalyses the reaction L-threonyl-[protein] + ATP = O-phospho-L-threonyl-[protein] + ADP + H(+). This is Probable LRR receptor-like serine/threonine-protein kinase At1g53430 from Arabidopsis thaliana (Mouse-ear cress).